The chain runs to 511 residues: 2,3-bisphosphoglycerate-independent phosphoglycerate mutase (511 aa).

Position 12 (D12) interacts with Mn(2+). Y36 is modified (phosphotyrosine). Mn(2+) is bound at residue S62. Residue S62 is the Phosphoserine intermediate of the active site. Substrate contacts are provided by residues H123, 153 to 154 (RD), R185, R191, 261 to 264 (RPDR), and K336. Residues D403, H407, D444, H445, and H462 each contribute to the Mn(2+) site.

Belongs to the BPG-independent phosphoglycerate mutase family. As to quaternary structure, monomer. Mn(2+) serves as cofactor.

It carries out the reaction (2R)-2-phosphoglycerate = (2R)-3-phosphoglycerate. It functions in the pathway carbohydrate degradation; glycolysis; pyruvate from D-glyceraldehyde 3-phosphate: step 3/5. Functionally, catalyzes the interconversion of 2-phosphoglycerate and 3-phosphoglycerate. The protein is 2,3-bisphosphoglycerate-independent phosphoglycerate mutase of Geobacillus thermodenitrificans (strain NG80-2).